The sequence spans 376 residues: Neuropeptide receptor 3 (376 aa).

At 1–29 the chain is on the extracellular side; the sequence is MEGGRNCVMTVQQWQPEYNDMNQIRAIFS. The chain crosses the membrane as a helical span at residues 30 to 50; sequence LLYLLVWVGAIVGNTLVLYVL. The Cytoplasmic segment spans residues 51–66; that stretch reads TFNQVSLSVRTVFVGC. The chain crosses the membrane as a helical span at residues 67 to 87; it reads LAGSDLLMCLFSLPITAISIF. At 88 to 89 the chain is on the extracellular side; that stretch reads SR. A helical membrane pass occupies residues 90–110; sequence VWVFPAIFCKLIGVFQGGTIF. Residues C98 and C175 are joined by a disulfide bond. The Cytoplasmic segment spans residues 111–139; sequence VSSFTLTVIALDRCVLILRPNQEIVNFPR. A helical membrane pass occupies residues 140 to 160; the sequence is AVFIVFCIWLLGYSLALPVGI. Residues 161-197 lie on the Extracellular side of the membrane; sequence YSDIAVYDEICGTFCEENWPDFNPDTGRSGIRRAYGL. A helical transmembrane segment spans residues 198-218; sequence SVLVLQFGIPALISSICYWMI. The Cytoplasmic segment spans residues 219–251; it reads SRVMSDQLARRRGHNIRPESETKLVNRKTRANR. A helical membrane pass occupies residues 252–272; it reads MMIVMVVGFVLAWMPFNAVNL. Over 273-284 the chain is Extracellular; that stretch reads YRDLFGISKWYS. Residues 285–305 traverse the membrane as a helical segment; it reads TVFALCHVCAMCSAVLNPIIY. Residues 306-376 lie on the Cytoplasmic side of the membrane; sequence SWFNPQFRQS…NDYRAGDQLL (71 aa).

Belongs to the G-protein coupled receptor 1 family.

It localises to the cell membrane. G-protein coupled receptor for flp-15 neuropeptides. Receptor activation assays suggest binding to predicted flp-15 peptides, GGPQGPLRF-NH2 and RGPSGPLRF-NH2. Likely involved in Gi/Go-coupled signaling pathways. This is Neuropeptide receptor 3 from Caenorhabditis elegans.